Reading from the N-terminus, the 243-residue chain is Glucosamine-6-phosphate deaminase (243 aa).

Catalysis depends on Asp-67, which acts as the Proton acceptor; for enolization step. The active-site For ring-opening step is the Asn-137. His-139 acts as the Proton acceptor; for ring-opening step in catalysis. Catalysis depends on Glu-144, which acts as the For ring-opening step.

Belongs to the glucosamine/galactosamine-6-phosphate isomerase family. NagB subfamily.

It catalyses the reaction alpha-D-glucosamine 6-phosphate + H2O = beta-D-fructose 6-phosphate + NH4(+). It functions in the pathway amino-sugar metabolism; N-acetylneuraminate degradation; D-fructose 6-phosphate from N-acetylneuraminate: step 5/5. Catalyzes the reversible isomerization-deamination of glucosamine 6-phosphate (GlcN6P) to form fructose 6-phosphate (Fru6P) and ammonium ion. This chain is Glucosamine-6-phosphate deaminase, found in Staphylococcus epidermidis (strain ATCC 12228 / FDA PCI 1200).